A 324-amino-acid polypeptide reads, in one-letter code: MNNLVKIATHSGTFHADEALAVYMLRRLDRFSGAQIVRSRDPQVLDSCDIIVDVGGKYDGIKYFDHHQREFNDTFSPKYSTRLSSAGLIYKHFGREVIHAVLPQLKINEQDLETLYEKVYQSFVEGLDANDNGISAYPAGLKPSFKAAMSLPEMVSSFLPAWNSEKQDDQTYLECFQKASDLMGTWFVRSVEHYALSWLPAKTLAREAILKAKDSPILIVDQFFPWKGHLFDIEKELGIENQFKYAIYSDGKAWRVQAVSIDPTSFTCRLPLPEPWRGIRDEKLSELTGIPGCIFVHASGFIGGNQTFEGALEMARKALDFPQN.

Belongs to the MYG1 family.

This chain is MYG1 protein C694.04c, found in Schizosaccharomyces pombe (strain 972 / ATCC 24843) (Fission yeast).